A 141-amino-acid chain; its full sequence is Large ribosomal subunit protein uL11 (141 aa).

This sequence belongs to the universal ribosomal protein uL11 family. Part of the ribosomal stalk of the 50S ribosomal subunit. Interacts with L10 and the large rRNA to form the base of the stalk. L10 forms an elongated spine to which L12 dimers bind in a sequential fashion forming a multimeric L10(L12)X complex. In terms of processing, one or more lysine residues are methylated.

Functionally, forms part of the ribosomal stalk which helps the ribosome interact with GTP-bound translation factors. The polypeptide is Large ribosomal subunit protein uL11 (Prochlorococcus marinus (strain SARG / CCMP1375 / SS120)).